The primary structure comprises 184 residues: GTPase RhebL1 (184 aa).

Residues Ser-16 to Ser-21, Leu-32 to Thr-38, Gly-63, Asn-119 to Asp-122, and Ser-149 to Ala-150 each bind GTP. The Effector region motif lies at Tyr-35–Tyr-43. Thr-38 is a Mg(2+) binding site. Cys-181 bears the Cysteine methyl ester mark. A lipid anchor (S-farnesyl cysteine) is attached at Cys-181. A propeptide spans Tyr-182–Met-184 (removed in mature form).

The protein belongs to the small GTPase superfamily. Rheb family. Interacts with MTOR.

The protein resides in the endomembrane system. It is found in the cytoplasm. The catalysed reaction is GTP + H2O = GDP + phosphate + H(+). Its function is as follows. Binds GTP and exhibits intrinsic GTPase activity. May activate NF-kappa-B-mediated gene transcription. Promotes signal transduction through MTOR, activates RPS6KB1, and is a downstream target of the small GTPase-activating proteins TSC1 and TSC2. The chain is GTPase RhebL1 (Rhebl1) from Mus musculus (Mouse).